The chain runs to 368 residues: Putative agmatine deiminase (368 aa).

The active-site Amidino-cysteine intermediate is cysteine 359.

This sequence belongs to the agmatine deiminase family.

The enzyme catalyses agmatine + H2O = N-carbamoylputrescine + NH4(+). The chain is Putative agmatine deiminase from Pectobacterium atrosepticum (strain SCRI 1043 / ATCC BAA-672) (Erwinia carotovora subsp. atroseptica).